We begin with the raw amino-acid sequence, 130 residues long: MGRKNDIIQKIDSFIGQKIYSLRLAKGLSRQQLAEVIDVTHQQLQKYEKAINRISVGRLVLIAEALDRNIDYFFEGLEEANKPQPVHTQHQRMCIEVSRNFMKINSTEEQQAINNLVKCLAGKEKLKTNV.

In terms of domain architecture, HTH cro/C1-type spans 19 to 73; sequence IYSLRLAKGLSRQQLAEVIDVTHQQLQKYEKAINRISVGRLVLIAEALDRNIDYF. Residues 30–49 constitute a DNA-binding region (H-T-H motif); sequence RQQLAEVIDVTHQQLQKYEK.

This is an uncharacterized protein from Rickettsia prowazekii (strain Madrid E).